The chain runs to 962 residues: Protease 3 (962 aa).

Positions 1–23 (MPRSIWFKALLLFVALWAPLSQA) are cleaved as a signal peptide. Zn(2+) is bound at residue His-88. The active-site Proton acceptor is the Glu-91. Residues His-92 and Glu-169 each coordinate Zn(2+).

The protein belongs to the peptidase M16 family. In terms of assembly, monomer. It depends on Zn(2+) as a cofactor.

The protein localises to the periplasm. The catalysed reaction is Preferential cleavage of 16-Tyr-|-Leu-17 and 25-Phe-|-Tyr-26 bonds of oxidized insulin B chain. Also acts on other substrates of Mw less than 7 kDa such as insulin and glucagon.. Functionally, endopeptidase that degrades small peptides of less than 7 kDa, such as glucagon and insulin. The chain is Protease 3 (ptrA) from Escherichia coli O6:H1 (strain CFT073 / ATCC 700928 / UPEC).